The following is a 161-amino-acid chain: Putative pre-16S rRNA nuclease (161 aa).

The disordered stretch occupies residues 141–161 (AAGSPPGALVPRNRVDPDRHA).

It belongs to the YqgF nuclease family.

The protein resides in the cytoplasm. Functionally, could be a nuclease involved in processing of the 5'-end of pre-16S rRNA. In Clavibacter michiganensis subsp. michiganensis (strain NCPPB 382), this protein is Putative pre-16S rRNA nuclease.